A 640-amino-acid chain; its full sequence is Threonine--tRNA ligase (640 aa).

The TGS domain maps to 1 to 61 (MPTITLPDGS…ERDASLQIIT (61 aa)). The interval 242–533 (DHRRIGKQLD…LIEHYAGAFP (292 aa)) is catalytic. Residues Cys333, His384, and His510 each contribute to the Zn(2+) site.

This sequence belongs to the class-II aminoacyl-tRNA synthetase family. As to quaternary structure, homodimer. The cofactor is Zn(2+).

Its subcellular location is the cytoplasm. The enzyme catalyses tRNA(Thr) + L-threonine + ATP = L-threonyl-tRNA(Thr) + AMP + diphosphate + H(+). Its function is as follows. Catalyzes the attachment of threonine to tRNA(Thr) in a two-step reaction: L-threonine is first activated by ATP to form Thr-AMP and then transferred to the acceptor end of tRNA(Thr). Also edits incorrectly charged L-seryl-tRNA(Thr). The chain is Threonine--tRNA ligase from Stutzerimonas stutzeri (strain A1501) (Pseudomonas stutzeri).